Here is a 477-residue protein sequence, read N- to C-terminus: Bifunctional protein HldE (477 aa).

Residues 1-318 (MKVNLPAFER…ENAVRGRADT (318 aa)) are ribokinase. 195–198 (NLSE) contributes to the ATP binding site. The active site involves aspartate 264. Residues 344–477 (MTNGVFDILH…IKKIQTESEK (134 aa)) form a cytidylyltransferase region.

This sequence in the N-terminal section; belongs to the carbohydrate kinase PfkB family. It in the C-terminal section; belongs to the cytidylyltransferase family. In terms of assembly, homodimer.

The catalysed reaction is D-glycero-beta-D-manno-heptose 7-phosphate + ATP = D-glycero-beta-D-manno-heptose 1,7-bisphosphate + ADP + H(+). It carries out the reaction D-glycero-beta-D-manno-heptose 1-phosphate + ATP + H(+) = ADP-D-glycero-beta-D-manno-heptose + diphosphate. The protein operates within nucleotide-sugar biosynthesis; ADP-L-glycero-beta-D-manno-heptose biosynthesis; ADP-L-glycero-beta-D-manno-heptose from D-glycero-beta-D-manno-heptose 7-phosphate: step 1/4. It functions in the pathway nucleotide-sugar biosynthesis; ADP-L-glycero-beta-D-manno-heptose biosynthesis; ADP-L-glycero-beta-D-manno-heptose from D-glycero-beta-D-manno-heptose 7-phosphate: step 3/4. Functionally, catalyzes the phosphorylation of D-glycero-D-manno-heptose 7-phosphate at the C-1 position to selectively form D-glycero-beta-D-manno-heptose-1,7-bisphosphate. Catalyzes the ADP transfer from ATP to D-glycero-beta-D-manno-heptose 1-phosphate, yielding ADP-D-glycero-beta-D-manno-heptose. The protein is Bifunctional protein HldE of Salmonella paratyphi A (strain ATCC 9150 / SARB42).